Reading from the N-terminus, the 180-residue chain is Bifunctional protein PyrR (180 aa).

Residues 101–113 carry the PRPP-binding motif; sequence VVLVDDVIFKGRT.

It belongs to the purine/pyrimidine phosphoribosyltransferase family. PyrR subfamily.

The catalysed reaction is UMP + diphosphate = 5-phospho-alpha-D-ribose 1-diphosphate + uracil. Functionally, regulates the transcription of the pyrimidine nucleotide (pyr) operon in response to exogenous pyrimidines. Also displays a weak uracil phosphoribosyltransferase activity which is not physiologically significant. The polypeptide is Bifunctional protein PyrR (Trichormus variabilis (strain ATCC 29413 / PCC 7937) (Anabaena variabilis)).